We begin with the raw amino-acid sequence, 201 residues long: Histidinol dehydrogenase (201 aa).

It belongs to the histidinol dehydrogenase family. As to quaternary structure, homodimer. Zn(2+) serves as cofactor.

The enzyme catalyses L-histidinol + 2 NAD(+) + H2O = L-histidine + 2 NADH + 3 H(+). Its pathway is amino-acid biosynthesis; L-histidine biosynthesis; L-histidine from 5-phospho-alpha-D-ribose 1-diphosphate: step 9/9. Its function is as follows. Catalyzes the sequential NAD-dependent oxidations of L-histidinol to L-histidinaldehyde and then to L-histidine. This chain is Histidinol dehydrogenase (hisD), found in Buchnera aphidicola subsp. Schlechtendalia chinensis.